A 62-amino-acid chain; its full sequence is Toxin Tst2 (62 aa).

The LCN-type CS-alpha/beta domain occupies 1–62 (KEGYAMDHEG…KVWDYATNKC (62 aa)). 4 disulfide bridges follow: Cys-11-Cys-62, Cys-15-Cys-38, Cys-23-Cys-43, and Cys-27-Cys-45. Cysteine amide is present on Cys-62.

In terms of tissue distribution, expressed by the venom gland.

It is found in the secreted. Alpha toxins bind voltage-independently at site-3 of sodium channels (Nav) and inhibit the inactivation of the activated channels, thereby blocking neuronal transmission. Is toxic to mice. The protein is Toxin Tst2 of Tityus stigmurus (Brazilian scorpion).